The sequence spans 778 residues: Endonuclease MutS2 (778 aa).

An ATP-binding site is contributed by 328-335 (GPNTGGKT). One can recognise a Smr domain in the interval 702 to 777 (LDLRGKRYEE…GSGATIVTFK (76 aa)).

The protein belongs to the DNA mismatch repair MutS family. MutS2 subfamily. As to quaternary structure, homodimer. Binds to stalled ribosomes, contacting rRNA.

Functionally, endonuclease that is involved in the suppression of homologous recombination and thus may have a key role in the control of bacterial genetic diversity. In terms of biological role, acts as a ribosome collision sensor, splitting the ribosome into its 2 subunits. Detects stalled/collided 70S ribosomes which it binds and splits by an ATP-hydrolysis driven conformational change. Acts upstream of the ribosome quality control system (RQC), a ribosome-associated complex that mediates the extraction of incompletely synthesized nascent chains from stalled ribosomes and their subsequent degradation. Probably generates substrates for RQC. The polypeptide is Endonuclease MutS2 (Streptococcus pneumoniae (strain Taiwan19F-14)).